Here is a 341-residue protein sequence, read N- to C-terminus: Glucokinase (341 aa).

Position 7 to 12 (7 to 12 (GDIGGT)) interacts with ATP.

The protein belongs to the bacterial glucokinase family.

Its subcellular location is the cytoplasm. It carries out the reaction D-glucose + ATP = D-glucose 6-phosphate + ADP + H(+). This chain is Glucokinase, found in Nostoc punctiforme (strain ATCC 29133 / PCC 73102).